A 186-amino-acid polypeptide reads, in one-letter code: Elongation factor P (186 aa).

The protein belongs to the elongation factor P family.

Its subcellular location is the cytoplasm. Its pathway is protein biosynthesis; polypeptide chain elongation. Functionally, involved in peptide bond synthesis. Stimulates efficient translation and peptide-bond synthesis on native or reconstituted 70S ribosomes in vitro. Probably functions indirectly by altering the affinity of the ribosome for aminoacyl-tRNA, thus increasing their reactivity as acceptors for peptidyl transferase. In Shewanella loihica (strain ATCC BAA-1088 / PV-4), this protein is Elongation factor P.